A 166-amino-acid chain; its full sequence is NADH-quinone oxidoreductase subunit I (166 aa).

2 4Fe-4S ferredoxin-type domains span residues 57-87 (LRRY…IESE) and 97-126 (TRYD…VTPI). [4Fe-4S] cluster is bound by residues Cys-67, Cys-70, Cys-73, Cys-77, Cys-106, Cys-109, Cys-112, and Cys-116.

Belongs to the complex I 23 kDa subunit family. NDH-1 is composed of 14 different subunits. Subunits NuoA, H, J, K, L, M, N constitute the membrane sector of the complex. The cofactor is [4Fe-4S] cluster.

The protein resides in the cell inner membrane. The catalysed reaction is a quinone + NADH + 5 H(+)(in) = a quinol + NAD(+) + 4 H(+)(out). In terms of biological role, NDH-1 shuttles electrons from NADH, via FMN and iron-sulfur (Fe-S) centers, to quinones in the respiratory chain. The immediate electron acceptor for the enzyme in this species is believed to be ubiquinone. Couples the redox reaction to proton translocation (for every two electrons transferred, four hydrogen ions are translocated across the cytoplasmic membrane), and thus conserves the redox energy in a proton gradient. This chain is NADH-quinone oxidoreductase subunit I, found in Legionella pneumophila (strain Lens).